Here is a 517-residue protein sequence, read N- to C-terminus: GMP synthase [glutamine-hydrolyzing] (517 aa).

The region spanning 4–193 (KIIILDFGSQ…VVDICGGKQD (190 aa)) is the Glutamine amidotransferase type-1 domain. The active-site Nucleophile is Cys79. Catalysis depends on residues His167 and Glu169. Positions 194–382 (WSAASFIETT…LGMPEHLITR (189 aa)) constitute a GMPS ATP-PPase domain. Residue 221–227 (SGGVDSS) coordinates ATP.

Homodimer.

It carries out the reaction XMP + L-glutamine + ATP + H2O = GMP + L-glutamate + AMP + diphosphate + 2 H(+). Its pathway is purine metabolism; GMP biosynthesis; GMP from XMP (L-Gln route): step 1/1. Catalyzes the synthesis of GMP from XMP. This chain is GMP synthase [glutamine-hydrolyzing], found in Phocaeicola vulgatus (strain ATCC 8482 / DSM 1447 / JCM 5826 / CCUG 4940 / NBRC 14291 / NCTC 11154) (Bacteroides vulgatus).